The primary structure comprises 437 residues: Interactor protein for cytohesin exchange factors 1 (437 aa).

The 100-residue stretch at His41 to Ile140 folds into the PH domain. Disordered regions lie at residues Glu143–Val225 and Leu273–Val307. Residues Cys151–Ile162 show a composition bias toward acidic residues. Over residues Ala172–Leu200 the composition is skewed to low complexity. Over residues Glu201 to Leu214 the composition is skewed to polar residues. The span at Leu273–Ser283 shows a compositional bias: low complexity. 2 CRAC domain regions span residues Lys315–Leu320 and Leu339–Lys348. A required for interaction with CYTH2 region spans residues Lys389 to Ile437. The disordered stretch occupies residues Gln406–Ile437. Ser411 carries the phosphoserine modification. Residues Ser427–Ile437 are compositionally biased toward polar residues.

As to quaternary structure, interacts with guanine-nucleotide exchange factors PSCD1, PSCD2, PSCD3 and PSCD4. Interacts (via C-terminus) with cytohesin-2 CYTH2.

The protein resides in the cytoplasm. It localises to the cell membrane. Enhances the promotion of guanine-nucleotide exchange by PSCD2 on ARF6 in a concentration-dependent manner. This chain is Interactor protein for cytohesin exchange factors 1 (IPCEF1), found in Homo sapiens (Human).